The following is an 872-amino-acid chain: MGLKARRAAGAAGGGGDGGGGGGGAANPAGGDAAAAGDEERKVGLAPGDVEQVTLALGAGADKDGTLLLEGGGRDEGQRRTPQGIGLLAKTPLSRPVKRNNAKYRRIQTLIYDALERPRGWALLYHALVFLIVLGCLILAVLTTFKEYETVSGDWLLLLETFAIFIFGAEFALRIWAAGCCCRYKGWRGRLKFARKPLCMLDIFVLIASVPVVAVGNQGNVLATSLRSLRFLQILRMLRMDRRGGTWKLLGSAICAHSKELITAWYIGFLTLILSSFLVYLVEKDVPEVDAQGEEMKEEFETYADALWWGLITLATIGYGDKTPKTWEGRLIAATFSLIGVSFFALPAGILGSGLALKVQEQHRQKHFEKRRKPAAELIQAAWRYYATNPNRIDLVATWRFYESVVSFPFFRKEQLEAASSQKLGLLDRVRLSNPRGSNTKGKLFTPLNVDAIEESPSKEPKPVGLNNKERFRTAFRMKAYAFWQSSEDAGTGDPMAEDRGYGNDFPIEDMIPTLKAAIRAVRILQFRLYKKKFKETLRPYDVKDVIEQYSAGHLDMLSRIKYLQTRIDMIFTPGPPSTPKHKKSQKGSAFTFPSQQSPRNEPYVARPSTSEIEDQSMMGKFVKVERQVQDMGKKLDFLVDMHMQHMERLQVQVTEYYPTKGTSSPAEAEKKEDNRYSDLKTIICNYSETGPPEPPYSFHQVTIDKVSPYGFFAHDPVNLPRGGPSSGKVQATPPSSATTYVERPTVLPILTLLDSRVSCHSQADLQGPYSDRISPRQRRSITRDSDTPLSLMSVNHEELERSPSGFSISQDRDDYVFGPNGGSSWMREKRYLAEGETDTDTDPFTPSGSMPLSSTGDGISDSVWTPSNKPI.

Residues 1–43 (MGLKARRAAGAAGGGGDGGGGGGGAANPAGGDAAAAGDEERKV) are disordered. Residues 1 to 120 (MGLKARRAAG…IYDALERPRG (120 aa)) are Cytoplasmic-facing. The span at 11–25 (AAGGGGDGGGGGGGA) shows a compositional bias: gly residues. A compositionally biased stretch (low complexity) spans 26-36 (ANPAGGDAAAA). T81 is subject to Phosphothreonine. The helical transmembrane segment at 121–143 (WALLYHALVFLIVLGCLILAVLT) threads the bilayer. Topologically, residues 144-153 (TFKEYETVSG) are extracellular. Residues 154 to 175 (DWLLLLETFAIFIFGAEFALRI) traverse the membrane as a helical segment. The Cytoplasmic segment spans residues 176–193 (WAAGCCCRYKGWRGRLKF). A helical membrane pass occupies residues 194–213 (ARKPLCMLDIFVLIASVPVV). The Extracellular portion of the chain corresponds to 214 to 225 (AVGNQGNVLATS). Residues 226–244 (LRSLRFLQILRMLRMDRRG) traverse the membrane as a helical; Voltage-sensor segment. R243 is an a 1,2-diacyl-sn-glycero-3-phospho-(1D-myo-inositol-4,5-bisphosphate) binding site. Over 245 to 256 (GTWKLLGSAICA) the chain is Cytoplasmic. T246 bears the Phosphothreonine mark. A helical membrane pass occupies residues 257–282 (HSKELITAWYIGFLTLILSSFLVYLV). K259 is an a 1,2-diacyl-sn-glycero-3-phospho-(1D-myo-inositol-4,5-bisphosphate) binding site. Residues 283–302 (EKDVPEVDAQGEEMKEEFET) are Extracellular-facing. The segment at residues 303-315 (YADALWWGLITLA) is an intramembrane region (pore-forming). Positions 316–321 (TIGYGD) match the Selectivity filter motif. Over 316–326 (TIGYGDKTPKT) the chain is Extracellular. The helical transmembrane segment at 327-353 (WEGRLIAATFSLIGVSFFALPAGILGS) threads the bilayer. Over 354-872 (GLALKVQEQH…SVWTPSNKPI (519 aa)) the chain is Cytoplasmic. A mediates interaction with calmodulin region spans residues 356–537 (ALKVQEQHRQ…RLYKKKFKET (182 aa)). K366 is an a 1,2-diacyl-sn-glycero-3-phospho-(1D-myo-inositol-4,5-bisphosphate) binding site. Disordered stretches follow at residues 575-611 (GPPSTPKHKKSQKGSAFTFPSQQSPRNEPYVARPSTS) and 764-872 (ADLQ…NKPI). Polar residues-rich tracts occupy residues 587–600 (KGSAFTFPSQQSPR) and 843–872 (DPFTPSGSMPLSSTGDGISDSVWTPSNKPI).

It belongs to the potassium channel family. KQT (TC 1.A.1.15) subfamily. Kv7.3/KCNQ3 sub-subfamily. Heterotetramer with KCNQ2; forms heterotetrameric native M-channel responsible for the M-current. Interacts with calmodulin; the interaction is calcium-independent, constitutive and participates in the proper assembly of a functional M-channel. Heteromultimer with KCNQ5. May associate with KCNE2. Interacts with IQCJ-SCHIP1. Interacts (via the pore module) with SLC5A3/SMIT1; forms a coregulatory complex that alters ion selectivity, voltage dependence and gating kinetics of the channel. Post-translationally, KCNQ2/KCNQ3 are ubiquitinated by NEDD4L. Ubiquitination leads to protein degradation. Degradation induced by NEDD4L is inhibited by USP36. Predominantly expressed in brain.

It localises to the cell membrane. It carries out the reaction K(+)(in) = K(+)(out). It catalyses the reaction Rb(+)(in) = Rb(+)(out). The catalysed reaction is Cs(+)(in) = Cs(+)(out). The enzyme catalyses Na(+)(in) = Na(+)(out). Its activity is regulated as follows. Phosphatidylinositol-4,5-bisphosphate (PIP2) potentiates the activation of KCNQ channels by enhancing the electro-mechanical coupling of the voltage-sensing domain (VSD) and the pore-forming domain (PD). In the closed state of the channel, PIP2 is anchored at the S2-S3 loop; upon channel activation, PIP2 interacts with the S4-S5 linker and is involved in channel gating. Calcium suppresses KCNQ2-KCNQ3 channel currents, with calcium-bound calmodulin inducing a change in channel configuration which leads to the reduction of channel affinity for PIP2 and subsequent current suppression. M-channel is activated by the anticonvulsant retigabine. Functionally, pore-forming subunit of the voltage-gated potassium (Kv) M-channel which is responsible for the M-current, a key controller of neuronal excitability. M-channel is composed of pore-forming subunits KCNQ2 and KCNQ3 assembled as heterotetramers. The native M-current has a slowly activating and deactivating potassium conductance which plays a critical role in determining the subthreshold electrical excitability of neurons as well as the responsiveness to synaptic inputs. M-channel is selectively permeable in vitro to other cations besides potassium, in decreasing order of affinity K(+) &gt; Rb(+) &gt; Cs(+) &gt; Na(+). M-channel association with SLC5A3/SMIT1 alters channel ion selectivity, increasing Na(+) and Cs(+) permeation relative to K(+). Suppressed by activation of M1 muscarinic acetylcholine receptors. KCNQ3 also associates with KCNQ5 to form a functional channel in vitro and may also contribute to the M-current in brain. This Homo sapiens (Human) protein is Potassium voltage-gated channel subfamily KQT member 3.